A 108-amino-acid polypeptide reads, in one-letter code: Malonate decarboxylase acyl carrier protein (108 aa).

Position 35 is an O-(phosphoribosyl dephospho-coenzyme A)serine (Ser35).

The protein belongs to the MdcC family. Covalently binds the prosthetic group of malonate decarboxylase.

The protein localises to the cytoplasm. Functionally, subunit of malonate decarboxylase, it is an acyl carrier protein to which acetyl and malonyl thioester residues are bound via a 2'-(5''-phosphoribosyl)-3'-dephospho-CoA prosthetic group and turn over during the catalytic mechanism. This is Malonate decarboxylase acyl carrier protein from Burkholderia cepacia (Pseudomonas cepacia).